Consider the following 785-residue polypeptide: SUN domain-containing protein 1 (785 aa).

The interval 1–138 is LMNA-binding; the sequence is MDFSRLHMYS…TRRPPVLDES (138 aa). Over 1–288 the chain is Nuclear; that stretch reads MDFSRLHMYS…VFLLTRCLRN (288 aa). Ser-48, Ser-100, and Ser-138 each carry phosphoserine. Residue Lys-195 forms a Glycyl lysine isopeptide (Lys-Gly) (interchain with G-Cter in SUMO2) linkage. The segment at 209–309 is SYNE2-binding; sequence SRVYSRDRNQ…FLLLAGLSLR (101 aa). An EMD-binding region spans residues 223–309; that stretch reads LLQILRRIGA…FLLLAGLSLR (87 aa). Residues 289–308 traverse the membrane as a helical segment; that stretch reads ICKFLVLLIPLFLLLAGLSL. Topologically, residues 309 to 785 are perinuclear space; the sequence is RGQGNFFSFL…RFRVHGEPVK (477 aa). A phosphoserine mark is found at Asp-333 and Ser-344. Residues 428–495 are a coiled coil; the sequence is HQEHEVRMSH…KSELSSWRHV (68 aa). Residues 574 to 785 form a sufficient for interaction with SYNE1 and SYNE2 region; sequence TSEAVVSAVS…RFRVHGEPVK (212 aa). Residues 622–784 enclose the SUN domain; sequence GGSILSTRCS…YRFRVHGEPV (163 aa).

In terms of assembly, core component of the LINC complex which is composed of inner nuclear membrane SUN domain-containing proteins coupled to outer nuclear membrane KASH domain-containing nesprins. SUN and KASH domain-containing proteins seem to bind each other promiscuously; however, differentially expression of LINC complex constituents is giving rise to specific assemblies. At least SUN1/2-containing core LINC complexes are proposed to be hexameric composed of three protomers of each KASH and SUN domain-containing protein. Interacts with KASH5 (via the last 22 amino acids); this interaction mediates KASH5 telomere localization by forming a SUN1:KASH5 LINC complex. May interact with SYNE3. Interacts with SYNE2 and SYNE1; probably forming respective LINC complexes. Interacts with A-type lamin with a strong preference for unprocessed A-type lamin compared with the mature protein. Interaction with lamins B1 and C is hardly detectable. Interacts with NAT10. Interacts with EMD and TSNAX. Associates with the nuclear pore complex (NPC). Interacts with CCDC79/TERB1; promoting the accumulation of the LINC complex complexes at the telomere-nuclear envelope attachment sites. Interacts (via KASH domain) with TMEM258. The disulfide bond with KASH domain-containing nesprins is required for stability of the respective LINC complexes under tensile forces.

The protein localises to the nucleus inner membrane. Functionally, as a component of the LINC (LInker of Nucleoskeleton and Cytoskeleton) complex involved in the connection between the nuclear lamina and the cytoskeleton. The nucleocytoplasmic interactions established by the LINC complex play an important role in the transmission of mechanical forces across the nuclear envelope and in nuclear movement and positioning. Required for interkinetic nuclear migration (INM) and essential for nucleokinesis and centrosome-nucleus coupling during radial neuronal migration in the cerebral cortex and during glial migration. Involved in telomere attachment to nuclear envelope in the prophase of meiosis implicating a SUN1/2:KASH5 LINC complex in which SUN1 and SUN2 seem to act at least partial redundantly. Required for gametogenesis and involved in selective gene expression of coding and non-coding RNAs needed for gametogenesis. Helps to define the distribution of nuclear pore complexes (NPCs). Required for efficient localization of SYNE4 in the nuclear envelope. May be involved in nuclear remodeling during sperm head formation in spermatogenesis. May play a role in DNA repair by suppressing non-homologous end joining repair to facilitate the repair of DNA cross-links. This is SUN domain-containing protein 1 from Homo sapiens (Human).